A 710-amino-acid chain; its full sequence is Polyribonucleotide nucleotidyltransferase (710 aa).

Mg(2+) contacts are provided by aspartate 489 and aspartate 495. Residues 556–615 (PKIDTIKIDVDKIKVVIGKGGETIDKIIAETGVKIDIDDEGNVSIYSSDQAAIDRTKEII) enclose the KH domain. The region spanning 625–693 (GEVYHAKVIR…EKGRVDASMK (69 aa)) is the S1 motif domain.

Belongs to the polyribonucleotide nucleotidyltransferase family. It depends on Mg(2+) as a cofactor.

The protein localises to the cytoplasm. It catalyses the reaction RNA(n+1) + phosphate = RNA(n) + a ribonucleoside 5'-diphosphate. In terms of biological role, involved in mRNA degradation. Catalyzes the phosphorolysis of single-stranded polyribonucleotides processively in the 3'- to 5'-direction. In Streptococcus pyogenes serotype M3 (strain ATCC BAA-595 / MGAS315), this protein is Polyribonucleotide nucleotidyltransferase.